We begin with the raw amino-acid sequence, 133 residues long: Small ribosomal subunit protein bS6 (133 aa).

The protein belongs to the bacterial ribosomal protein bS6 family.

Functionally, binds together with bS18 to 16S ribosomal RNA. The protein is Small ribosomal subunit protein bS6 of Chlorobium luteolum (strain DSM 273 / BCRC 81028 / 2530) (Pelodictyon luteolum).